A 359-amino-acid polypeptide reads, in one-letter code: Peptide chain release factor 1 (359 aa).

Residue Q235 is modified to N5-methylglutamine. The tract at residues A280–I306 is disordered.

Belongs to the prokaryotic/mitochondrial release factor family. Post-translationally, methylated by PrmC. Methylation increases the termination efficiency of RF1.

Its subcellular location is the cytoplasm. Functionally, peptide chain release factor 1 directs the termination of translation in response to the peptide chain termination codons UAG and UAA. The protein is Peptide chain release factor 1 of Rhizobium leguminosarum bv. trifolii (strain WSM2304).